Reading from the N-terminus, the 99-residue chain is Plastocyanin B'/B'' (99 aa).

Residues isoleucine 1–asparagine 99 form the Plastocyanin-like domain. Histidine 37, cysteine 84, histidine 87, and methionine 92 together coordinate Cu cation.

The protein belongs to the plastocyanin family. The cofactor is Cu(2+).

The protein resides in the plastid. It localises to the chloroplast thylakoid membrane. Participates in electron transfer between P700 and the cytochrome b6-f complex in photosystem I. The chain is Plastocyanin B'/B'' from Nicotiana tabacum (Common tobacco).